We begin with the raw amino-acid sequence, 128 residues long: Ribosome-binding factor A (128 aa).

It belongs to the RbfA family. As to quaternary structure, monomer. Binds 30S ribosomal subunits, but not 50S ribosomal subunits or 70S ribosomes.

It is found in the cytoplasm. Functionally, one of several proteins that assist in the late maturation steps of the functional core of the 30S ribosomal subunit. Associates with free 30S ribosomal subunits (but not with 30S subunits that are part of 70S ribosomes or polysomes). Required for efficient processing of 16S rRNA. May interact with the 5'-terminal helix region of 16S rRNA. This is Ribosome-binding factor A from Rippkaea orientalis (strain PCC 8801 / RF-1) (Cyanothece sp. (strain PCC 8801)).